Consider the following 372-residue polypeptide: NAD(P)H-quinone oxidoreductase subunit 1 (372 aa).

8 helical membrane passes run 29–49 (WIPF…LVVV), 97–117 (WLFT…YLIV), 130–150 (VGIF…LMAG), 176–196 (LALS…IDIV), 204–224 (ILGW…IAAL), 254–274 (FALF…VFAI), 308–328 (SLGI…AVLM), and 347–367 (FLLP…LAFP).

Belongs to the complex I subunit 1 family. As to quaternary structure, NDH-1 is composed of at least 11 different subunits.

The protein resides in the cellular thylakoid membrane. It catalyses the reaction a plastoquinone + NADH + (n+1) H(+)(in) = a plastoquinol + NAD(+) + n H(+)(out). It carries out the reaction a plastoquinone + NADPH + (n+1) H(+)(in) = a plastoquinol + NADP(+) + n H(+)(out). Its function is as follows. NDH-1 shuttles electrons from an unknown electron donor, via FMN and iron-sulfur (Fe-S) centers, to quinones in the respiratory and/or the photosynthetic chain. The immediate electron acceptor for the enzyme in this species is believed to be plastoquinone. Couples the redox reaction to proton translocation, and thus conserves the redox energy in a proton gradient. The chain is NAD(P)H-quinone oxidoreductase subunit 1 from Crocosphaera subtropica (strain ATCC 51142 / BH68) (Cyanothece sp. (strain ATCC 51142)).